The chain runs to 324 residues: Biotin synthase (324 aa).

Positions 42–269 constitute a Radical SAM core domain; sequence NEVQISSLLN…KSYIRLAAGR (228 aa). The [4Fe-4S] cluster site is built by Cys-57, Cys-61, and Cys-64. Residues Cys-101, Cys-132, Cys-192, and Arg-264 each coordinate [2Fe-2S] cluster.

This sequence belongs to the radical SAM superfamily. Biotin synthase family. As to quaternary structure, homodimer. [4Fe-4S] cluster serves as cofactor. Requires [2Fe-2S] cluster as cofactor.

The catalysed reaction is (4R,5S)-dethiobiotin + (sulfur carrier)-SH + 2 reduced [2Fe-2S]-[ferredoxin] + 2 S-adenosyl-L-methionine = (sulfur carrier)-H + biotin + 2 5'-deoxyadenosine + 2 L-methionine + 2 oxidized [2Fe-2S]-[ferredoxin]. Its pathway is cofactor biosynthesis; biotin biosynthesis; biotin from 7,8-diaminononanoate: step 2/2. Functionally, catalyzes the conversion of dethiobiotin (DTB) to biotin by the insertion of a sulfur atom into dethiobiotin via a radical-based mechanism. In Ehrlichia canis (strain Jake), this protein is Biotin synthase.